A 632-amino-acid polypeptide reads, in one-letter code: Probable extracellular metalloproteinase 2 (632 aa).

Positions 1–19 (MHGLLLAGLAAALPLGVAG) are cleaved as a signal peptide. A propeptide spanning residues 20 to 244 (LPARQQSGLS…VHNVVDYVAS (225 aa)) is cleaved from the precursor. Residues asparagine 81 and asparagine 270 are each glycosylated (N-linked (GlcNAc...) asparagine). Position 429 (histidine 429) interacts with Zn(2+). Glutamate 430 is a catalytic residue. Histidine 433 contacts Zn(2+).

This sequence belongs to the peptidase M36 family. Zn(2+) serves as cofactor.

The protein localises to the secreted. Its function is as follows. Secreted metalloproteinase probably acting as a virulence factor. This chain is Probable extracellular metalloproteinase 2 (MEP2), found in Arthroderma benhamiae (strain ATCC MYA-4681 / CBS 112371) (Trichophyton mentagrophytes).